A 740-amino-acid polypeptide reads, in one-letter code: E3 ubiquitin-protein ligase WAV3 (740 aa).

The tract at residues 14–105 (PRNSDAAAPD…AISNPSSPRS (92 aa)) is disordered. Residues 49 to 67 (SGGSNPSTPRSTSSPSLRC) show a composition bias toward low complexity. Residues 71 to 90 (DAQTPTAEQTSTPRSATKSP) show a composition bias toward polar residues. The segment at 122 to 167 (CGICLNSVKTGQGTAKYTAECSHAFHFPCIADYVRKQGKLVCPVCN) adopts an RING-type; atypical zinc-finger fold. A VWFA domain is found at 332–476 (DLVVVVDVGG…IPVTEHGFGE (145 aa)). Residues 677-709 (QSQHQQQHNQRRRGSERETTTTMTLMDENGEPL) are disordered.

Interacts with SINAT1, SINAT2, SINAT3, SINAT4, SINAT5, TOR1/SPR2 and FIP2. As to expression, expressed in root tips and leaf primordia.

It carries out the reaction S-ubiquitinyl-[E2 ubiquitin-conjugating enzyme]-L-cysteine + [acceptor protein]-L-lysine = [E2 ubiquitin-conjugating enzyme]-L-cysteine + N(6)-ubiquitinyl-[acceptor protein]-L-lysine.. In terms of biological role, E3 ubiquitin-protein ligase involved in the regulation of root growth. Acts as a positive regulator of root gravitropism. Possesses E3 protein ligase activity in vitro. The sequence is that of E3 ubiquitin-protein ligase WAV3 from Arabidopsis thaliana (Mouse-ear cress).